We begin with the raw amino-acid sequence, 145 residues long: MYASVIIYTLVALCGVMSSPVQEAEVAPRAIEPRMPTFADIPFPRFPSHNNHHHNEKDKGKDKGNGKGVDKNNGGGCDTGTNTQLNACSAGSPYCCSSDGNGGHICSNTTACDQKVICCNNNNGFQICIGEIDFNVPVTINIIYD.

The first 18 residues, 1–18 (MYASVIIYTLVALCGVMS), serve as a signal peptide directing secretion. Disulfide bonds link Cys-88–Cys-118, Cys-95–Cys-112, Cys-96–Cys-106, and Cys-119–Cys-128. Residue Asn-108 is glycosylated (N-linked (GlcNAc...) asparagine).

It belongs to the fungal hydrophobin family. Self-assembles to form functional amyloid fibrils called rodlets. Self-assembly into fibrillar rodlets occurs spontaneously at hydrophobic:hydrophilic interfaces and the rodlets further associate laterally to form amphipathic monolayers.

The protein localises to the secreted. The protein resides in the cell wall. Functionally, aerial growth, conidiation, and dispersal of filamentous fungi in the environment rely upon a capability of their secreting small amphipathic proteins called hydrophobins (HPBs) with low sequence identity. Class I can self-assemble into an outermost layer of rodlet bundles on aerial cell surfaces, conferring cellular hydrophobicity that supports fungal growth, development and dispersal; whereas Class II form highly ordered films at water-air interfaces through intermolecular interactions but contribute nothing to the rodlet structure. Hyd1 is a class I hydrophobin that is involved in plant root attachment and colonization, and that might also protect the growing hyphae from locally synthesized plant defense compounds during the first stages of cucumber interaction, allowing this opportunistic, non-pathogenic fungus to colonize the intercellular spaces of the plant root. This is Class I hydrophobin 1 from Trichoderma asperellum (Filamentous fungus).